Reading from the N-terminus, the 63-residue chain is Potassium channel toxin MeuTXKalpha4 (63 aa).

Residues 1–28 (MSRLLIFILTAVVLSVIIDILNNSKVEG) form the signal peptide. Intrachain disulfides connect cysteine 35–cysteine 53, cysteine 39–cysteine 59, and cysteine 43–cysteine 61.

The protein belongs to the short scorpion toxin superfamily. Potassium channel inhibitor family. In terms of tissue distribution, expressed by the venom gland.

Its subcellular location is the secreted. Functionally, may block voltage-gated potassium channels (Kv). The chain is Potassium channel toxin MeuTXKalpha4 from Mesobuthus eupeus (Lesser Asian scorpion).